The chain runs to 426 residues: MSAIVDIVAREILDSRGNPTVEVDVELASGAKGRAAVPSGASTGAHEAVELRDGDKSRFGGKGVLKAVEHVETEILEALQGAESMDQVAIDEAMIDLDGTPNKARLGANAILAVSLAVAKASAEELQIPLYRYVGGVYARTLPVPMMNIVNGGQHADNPIDIQEFMIQPVGAPTLADAVRVGSEIFAQLKKNLSAAGHNTNVGDEGGFAPGLKSADDALGFITKAVEAAGYRPGDDVTFALDCAATEFYRDGLYVMEGEGKTLDSAGMVAYLADLAARYPIVSIEDGLAEDDWEGWAVLTATLGKTVQLVGDDLFVTNPDRLRRGIKAGVANSLLVKVNQIGTLSETLEAVETAQRAGYTAVMSHRSGETEDSTIADLAVATNCGQIKTGSLSRSDRTAKYNQLIRIENELATAARYAGRTILKTA.

Position 163 (Gln163) interacts with (2R)-2-phosphoglycerate. Residue Glu205 is the Proton donor of the active site. 3 residues coordinate Mg(2+): Asp242, Glu285, and Asp312. Positions 337, 366, 367, and 388 each coordinate (2R)-2-phosphoglycerate. The active-site Proton acceptor is Lys337.

This sequence belongs to the enolase family. The cofactor is Mg(2+).

The protein localises to the cytoplasm. It localises to the secreted. Its subcellular location is the cell surface. It catalyses the reaction (2R)-2-phosphoglycerate = phosphoenolpyruvate + H2O. Its pathway is carbohydrate degradation; glycolysis; pyruvate from D-glyceraldehyde 3-phosphate: step 4/5. Functionally, catalyzes the reversible conversion of 2-phosphoglycerate (2-PG) into phosphoenolpyruvate (PEP). It is essential for the degradation of carbohydrates via glycolysis. The polypeptide is Enolase (Gluconacetobacter diazotrophicus (strain ATCC 49037 / DSM 5601 / CCUG 37298 / CIP 103539 / LMG 7603 / PAl5)).